Consider the following 343-residue polypeptide: Homeobox protein DBX1 (343 aa).

2 disordered regions span residues 56 to 100 and 240 to 343; these read RSVP…TAFS and KERE…ITVS. The homeobox DNA-binding region spans 181 to 240; the sequence is GMLRRAVFSDVQRKALEKMFQKQKYISKPDRKKLAAKLGLKDSQVKIWFQNRRMKWRNSK. The span at 314–323 shows a compositional bias: low complexity; the sequence is AHSSSPGKPS. Acidic residues predominate over residues 326-343; it reads SDSEEEEEGEEQEEITVS.

The protein belongs to the H2.0 homeobox family.

The protein localises to the nucleus. Functionally, could have a role in patterning the central nervous system during embryogenesis. Has a key role in regulating the distinct phenotypic features that distinguish two major classes of ventral interneurons, V0 and V1 neurons. Regulates the transcription factor profile, neurotransmitter phenotype, intraspinal migratory path and axonal trajectory of V0 neurons, features that differentiate them from an adjacent set of V1 neurons. This chain is Homeobox protein DBX1 (DBX1), found in Homo sapiens (Human).